The primary structure comprises 345 residues: tRNA-specific 2-thiouridylase MnmA 1 (345 aa).

Residues 9 to 16 (GMSGGIDS) and leucine 35 contribute to the ATP site. Residue cysteine 96 is the Nucleophile of the active site. A disulfide bridge connects residues cysteine 96 and cysteine 191. Glycine 120 contributes to the ATP binding site. The interval 138–140 (KDQ) is interaction with tRNA. Cysteine 191 serves as the catalytic Cysteine persulfide intermediate. An interaction with tRNA region spans residues 293–294 (RY).

The protein belongs to the MnmA/TRMU family.

It is found in the cytoplasm. The catalysed reaction is S-sulfanyl-L-cysteinyl-[protein] + uridine(34) in tRNA + AH2 + ATP = 2-thiouridine(34) in tRNA + L-cysteinyl-[protein] + A + AMP + diphosphate + H(+). Functionally, catalyzes the 2-thiolation of uridine at the wobble position (U34) of tRNA, leading to the formation of s(2)U34. The protein is tRNA-specific 2-thiouridylase MnmA 1 of Aliarcobacter butzleri (strain RM4018) (Arcobacter butzleri).